A 717-amino-acid polypeptide reads, in one-letter code: Fatty acid oxidation complex subunit alpha (717 aa).

Residues 1–189 (MIYQSPTIEV…NVGAIDALVA (189 aa)) are enoyl-CoA hydratase/isomerase. A substrate-binding site is contributed by Asp296. Residues 311-717 (KKVNSAAVLG…ANNGSYYQQA (407 aa)) are 3-hydroxyacyl-CoA dehydrogenase. Residues Met324, Asp343, 400–402 (VVE), Lys407, and Ser429 each bind NAD(+). His450 acts as the For 3-hydroxyacyl-CoA dehydrogenase activity in catalysis. Asn453 is a binding site for NAD(+). The substrate site is built by Asn500 and Tyr660.

In the N-terminal section; belongs to the enoyl-CoA hydratase/isomerase family. It in the C-terminal section; belongs to the 3-hydroxyacyl-CoA dehydrogenase family. In terms of assembly, heterotetramer of two alpha chains (FadB) and two beta chains (FadA).

The catalysed reaction is a (3S)-3-hydroxyacyl-CoA + NAD(+) = a 3-oxoacyl-CoA + NADH + H(+). It carries out the reaction a (3S)-3-hydroxyacyl-CoA = a (2E)-enoyl-CoA + H2O. The enzyme catalyses a 4-saturated-(3S)-3-hydroxyacyl-CoA = a (3E)-enoyl-CoA + H2O. It catalyses the reaction (3S)-3-hydroxybutanoyl-CoA = (3R)-3-hydroxybutanoyl-CoA. The catalysed reaction is a (3Z)-enoyl-CoA = a 4-saturated (2E)-enoyl-CoA. It carries out the reaction a (3E)-enoyl-CoA = a 4-saturated (2E)-enoyl-CoA. It functions in the pathway lipid metabolism; fatty acid beta-oxidation. Involved in the aerobic and anaerobic degradation of long-chain fatty acids via beta-oxidation cycle. Catalyzes the formation of 3-oxoacyl-CoA from enoyl-CoA via L-3-hydroxyacyl-CoA. It can also use D-3-hydroxyacyl-CoA and cis-3-enoyl-CoA as substrate. The sequence is that of Fatty acid oxidation complex subunit alpha from Shewanella piezotolerans (strain WP3 / JCM 13877).